Reading from the N-terminus, the 332-residue chain is tRNA uridine(34) hydroxylase (332 aa).

Residues 127–221 (SDPETVLIDT…YLEEVPKEKS (95 aa)) form the Rhodanese domain. Cysteine 181 acts as the Cysteine persulfide intermediate in catalysis. A disordered region spans residues 308-332 (AKKLAQLNKQKKQQAKEAARKKAQQ). The segment covering 321–332 (QAKEAARKKAQQ) has biased composition (basic and acidic residues).

This sequence belongs to the TrhO family.

It catalyses the reaction uridine(34) in tRNA + AH2 + O2 = 5-hydroxyuridine(34) in tRNA + A + H2O. Functionally, catalyzes oxygen-dependent 5-hydroxyuridine (ho5U) modification at position 34 in tRNAs. This Francisella tularensis subsp. tularensis (strain FSC 198) protein is tRNA uridine(34) hydroxylase.